Reading from the N-terminus, the 357-residue chain is Protein RecA (357 aa).

71-78 (GPESSGKT) provides a ligand contact to ATP.

The protein belongs to the RecA family.

It localises to the cytoplasm. Its function is as follows. Can catalyze the hydrolysis of ATP in the presence of single-stranded DNA, the ATP-dependent uptake of single-stranded DNA by duplex DNA, and the ATP-dependent hybridization of homologous single-stranded DNAs. It interacts with LexA causing its activation and leading to its autocatalytic cleavage. In Ehrlichia ruminantium (strain Gardel), this protein is Protein RecA.